We begin with the raw amino-acid sequence, 262 residues long: MPPPPLISLDVEGVYFKTRIATLKSIEGTYFTKLFETNWREQLDRDGRLFIDRDSSVFPVILNFLRDHEKCSLPKDEYQLMRILREAVFFKIGPLRNMIEHKLRTFCTCPPELPSTPIPNQILTQKENVPIVPRNLLLSKPPPPPPPPLPSLMQPKDTVQIPMRKPPTGRNSKKIKTSADSISLPRNFTHIAHVGWNGASVLFDKKMTDDPTVRKICDAAAEAVDLSAVYNVVNKNADEESHSVEVLITGGLMQSRDGTSRH.

A BTB domain is found at 5–107; sequence PLISLDVEGV…MIEHKLRTFC (103 aa). In terms of domain architecture, CRIB spans 182 to 195; sequence ISLPRNFTHIAHVG.

This is an uncharacterized protein from Caenorhabditis elegans.